We begin with the raw amino-acid sequence, 1070 residues long: Probable arabinosyltransferase C (1070 aa).

The next 12 helical transmembrane spans lie at 10-32 (IARL…TPFL), 210-232 (LLKT…ALHL), 247-269 (SRWW…WHFV), 399-421 (VATS…LFSG), 425-442 (IASI…LTIL), 449-471 (FGAV…LIFR), 512-534 (SVAR…AMSL), 547-564 (SRRI…MMFT), 574-596 (VFAG…AALR), 603-625 (VFAA…WWYV), 645-664 (TALL…FHFV), and 685-707 (SPIA…MAMI).

This sequence belongs to the emb family.

It is found in the cell membrane. Functionally, arabinosyl transferase responsible for the polymerization of arabinose into the arabinan of arabinogalactan. The polypeptide is Probable arabinosyltransferase C (embC) (Mycobacterium leprae (strain TN)).